The chain runs to 695 residues: D-(-)-3-hydroxybutyrate oligomer hydrolase (695 aa).

Positions 1–17 (MTTHGWGTRILLGAALA) are cleaved as a signal peptide. Residue S308 is the Charge relay system of the active site.

Belongs to the D-(-)-3-hydroxybutyrate oligomer hydrolase family.

The protein localises to the secreted. It carries out the reaction (3R)-hydroxybutanoate dimer + H2O = 2 (R)-3-hydroxybutanoate + H(+). It participates in lipid metabolism; butanoate metabolism. Its function is as follows. Participates in the degradation of poly-3-hydroxybutyrate (PHB). It works downstream of poly(3-hydroxybutyrate) depolymerase, hydrolyzing D(-)-3-hydroxybutyrate oligomers of various length (3HB-oligomers) into 3HB-monomers. The sequence is that of D-(-)-3-hydroxybutyrate oligomer hydrolase from Burkholderia ambifaria (strain ATCC BAA-244 / DSM 16087 / CCUG 44356 / LMG 19182 / AMMD) (Burkholderia cepacia (strain AMMD)).